A 1458-amino-acid chain; its full sequence is Phospholipase B1, membrane-associated (1458 aa).

Residues 1 to 21 form the signal peptide; sequence MGLRPGIFLLELLLLLGQGTP. Residues 22-1417 are Extracellular-facing; that stretch reads QIHTSPRKST…QAEEAPEVLY (1396 aa). 3 consecutive repeat copies span residues 39 to 347, 362 to 707, and 708 to 1054. A 4 X 308-326 AA approximate repeats region spans residues 39 to 1402; the sequence is ETLKNSPFPC…SPYLYTLRNS (1364 aa). Asparagine 173 and asparagine 240 each carry an N-linked (GlcNAc...) asparagine glycan. Residue serine 400 is part of the active site. An N-linked (GlcNAc...) asparagine glycan is attached at asparagine 493. The active site involves aspartate 514. Asparagine 529 and asparagine 590 each carry an N-linked (GlcNAc...) asparagine glycan. Histidine 655 is an active-site residue. Residues asparagine 690, asparagine 783, asparagine 797, asparagine 809, asparagine 1055, asparagine 1113, asparagine 1275, and asparagine 1378 are each glycosylated (N-linked (GlcNAc...) asparagine). Residues 1064-1402 form repeat 4; sequence IENWGSDFLC…SPYLYTLRNS (339 aa). The segment at 1403 to 1445 is necessary for membrane localization; it reads RLLPDQAEEAPEVLYWAVPVAAGVGLVVGIIGTVVWRCRRGGR. A helical transmembrane segment spans residues 1418-1438; that stretch reads WAVPVAAGVGLVVGIIGTVVW. Over 1439–1458 the chain is Cytoplasmic; it reads RCRRGGRREDPPMSLRTVAL.

The protein belongs to the 'GDSL' lipolytic enzyme family. Phospholipase B1 subfamily. Undergoes proteolytic cleavage in the ileum. Expressed in the epidermis (at protein level).

Its subcellular location is the apical cell membrane. The catalysed reaction is a 1,2-diacyl-sn-glycero-3-phosphocholine + H2O = a 1-acyl-sn-glycero-3-phosphocholine + a fatty acid + H(+). It catalyses the reaction a 1-O-alkyl-2-acyl-sn-glycero-3-phosphocholine + H2O = a 1-O-alkyl-sn-glycero-3-phosphocholine + a fatty acid + H(+). The enzyme catalyses a 1-acyl-sn-glycero-3-phosphocholine + H2O = sn-glycerol 3-phosphocholine + a fatty acid + H(+). It carries out the reaction a triacylglycerol + H2O = a diacylglycerol + a fatty acid + H(+). The catalysed reaction is 1,2-dihexadecanoyl-sn-glycero-3-phosphocholine + H2O = 1-hexadecanoyl-sn-glycero-3-phosphocholine + hexadecanoate + H(+). It catalyses the reaction 1-hexadecanoyl-2-(9Z-octadecenoyl)-sn-glycero-3-phosphocholine + H2O = 1-hexadecanoyl-sn-glycero-3-phosphocholine + (9Z)-octadecenoate + H(+). The enzyme catalyses 1,2-di-(9Z-octadecenoyl)-sn-glycero-3-phosphocholine + H2O = 1-(9Z-octadecenoyl)-sn-glycero-3-phosphocholine + (9Z)-octadecenoate + H(+). It carries out the reaction 1-hexadecanoyl-2-(9Z,12Z-octadecadienoyl)-sn-glycero-3-phosphocholine + H2O = (9Z,12Z)-octadecadienoate + 1-hexadecanoyl-sn-glycero-3-phosphocholine + H(+). The catalysed reaction is 1-hexadecanoyl-2-(9Z,12Z-octadecadienoyl)-sn-glycero-3-phosphocholine + H2O = 2-(9Z,12Z-octadecadienoyl)-sn-glycero-3-phosphocholine + hexadecanoate + H(+). It catalyses the reaction 1-hexadecanoyl-2-(9Z-octadecenoyl)-sn-glycero-3-phosphoethanolamine + H2O = 1-hexadecanoyl-sn-glycero-3-phosphoethanolamine + (9Z)-octadecenoate + H(+). The enzyme catalyses 1-hexadecanoyl-2-(9Z-octadecenoyl)-sn-glycero-3-phospho-(1'-sn-glycerol) + H2O = 1-hexadecanoyl-sn-glycero-3-phospho-(1'-sn-glycerol) + (9Z)-octadecenoate + H(+). It carries out the reaction 1,2-dihexadecanoyl-sn-glycero-3-phosphocholine + 2 H2O = sn-glycerol 3-phosphocholine + 2 hexadecanoate + 2 H(+). The catalysed reaction is 1-O-hexadecyl-2-(9Z)-octadecenoyl-sn-glycero-3-phosphocholine + H2O = 1-O-hexadecyl-sn-glycero-3-phosphocholine + (9Z)-octadecenoate + H(+). It catalyses the reaction 1-hexadecanoyl-sn-glycero-3-phosphocholine + H2O = sn-glycerol 3-phosphocholine + hexadecanoate + H(+). The enzyme catalyses 1,2,3-tri-(9Z-octadecenoyl)-glycerol + H2O = di-(9Z)-octadecenoylglycerol + (9Z)-octadecenoate + H(+). It carries out the reaction 1-hexadecanoyl-2-(9Z)-octadecenoyl-3-octadecanoyl-sn-glycerol + H2O = 1-hexadecanoyl-2-(9Z-octadecenoyl)-sn-glycerol + octadecanoate + H(+). The catalysed reaction is 1,3-dihexadecanoyl-2-(9Z-octadecenoyl)glycerol + H2O = 1,3-dihexadecanoylglycerol + (9Z)-octadecenoate + H(+). It catalyses the reaction 1,3-dihexadecanoyl-2-(9Z-octadecenoyl)glycerol + H2O = 1-hexadecanoyl-2-(9Z-octadecenoyl)-glycerol + hexadecanoate + H(+). The enzyme catalyses 1-hexadecanoyl-2-(9Z)-octadecenoyl-3-octadecanoyl-sn-glycerol + H2O = 1-hexadecanoyl-3-octadecanoyl-sn-glycerol + (9Z)-octadecenoate + H(+). It carries out the reaction 1-hexadecanoyl-2-(9Z)-octadecenoyl-3-octadecanoyl-sn-glycerol + H2O = 2-(9Z-octadecenoyl)-3-octadecanoyl-sn-glycerol + hexadecanoate + H(+). The catalysed reaction is 1-octadecanoyl-2-(9Z,12Z)-octadecadienoyl-sn-glycerol + H2O = 1-octadecanoyl-sn-glycerol + (9Z,12Z)-octadecadienoate + H(+). It catalyses the reaction 1,2-di-(9Z-octadecenoyl)-sn-glycerol + H2O = 1-(9Z-octadecenoyl)-sn-glycerol + (9Z)-octadecenoate + H(+). The enzyme catalyses 2,3-di-(9Z)-octadecenoyl-sn-glycerol + H2O = 3-(9Z-octadecenoyl)-sn-glycerol + (9Z)-octadecenoate + H(+). It carries out the reaction 1,3-di-(9Z-octadecenoyl)-glycerol + H2O = 1-(9Z-octadecenoyl)-glycerol + (9Z)-octadecenoate + H(+). The catalysed reaction is 1-(9Z-octadecenoyl)-glycerol + H2O = glycerol + (9Z)-octadecenoate + H(+). It catalyses the reaction 2-(9Z-octadecenoyl)-glycerol + H2O = glycerol + (9Z)-octadecenoate + H(+). Its function is as follows. Calcium-independent membrane-associated phospholipase that catalyzes complete diacylation of phospholipids by hydrolyzing both sn-1 and sn-2 fatty acyl chains attached to the glycerol backbone (phospholipase B activity). Has dual phospholipase and lysophospholipase activities toward diacylphospholipids. Preferentially cleaves sn-2 ester bonds over sn-1 bonds. Acts as a lipase toward glycerolipid substrates. Hydrolyzes fatty acyl chains of diacylglycerols with preference for the sn-2 position and of triacylglycerols with not positional selectivity. May also hydrolyze long chain retinyl esters such as retinyl palmitate. May contribute to digestion of dietary phospholipids, glycerolipids and retinoids, facilitating lipid absorption at the brush border. The chain is Phospholipase B1, membrane-associated (PLB1) from Homo sapiens (Human).